Reading from the N-terminus, the 176-residue chain is Zinc finger A20 and AN1 domain-containing stress-associated protein 9 (176 aa).

Residues 16-50 (ASEPKLCVKGCGFFGSPSNMDLCSKCYRGICAEEA) form an A20-type zinc finger. Positions 22, 26, 38, 41, 117, 120, 131, 133, 138, 141, 147, and 149 each coordinate Zn(2+). Residues 111 to 157 (PARTNRCLCCNKKVGIMGFKCKCGSTFCGEHRYPETHDCSFDFKEVG) form an AN1-type zinc finger.

Functionally, may be involved in environmental stress response. The chain is Zinc finger A20 and AN1 domain-containing stress-associated protein 9 (SAP9) from Arabidopsis thaliana (Mouse-ear cress).